Here is a 1001-residue protein sequence, read N- to C-terminus: Serine/threonine-protein kinase TAO1 (1001 aa).

Ser9 bears the Phosphoserine mark. The region spanning 28 to 281 (FTDLREIGHG…SEELLKHIFV (254 aa)) is the Protein kinase domain. ATP is bound by residues 34–42 (IGHGSFGAV) and Lys57. The Proton acceptor role is filled by Asp151. The interval 324 to 433 (PAVEAQEEEE…QVSRHKSHYR (110 aa)) is disordered. Over residues 350–373 (SNQSIPSMSISASSQSSSVNSLPD) the composition is skewed to low complexity. Basic and acidic residues-rich tracts occupy residues 375-388 (SDDK…EGDH) and 399-416 (LKPE…RTRA). 2 positions are modified to phosphoserine: Ser421 and Ser445. The stretch at 458 to 651 (SELREQMSGY…QTQKDLEHAM (194 aa)) forms a coiled coil. The segment at 567-587 (KEELNENQSTPKKEKQEWLSK) is disordered. The span at 577 to 587 (PKKEKQEWLSK) shows a compositional bias: basic and acidic residues. Thr669 is modified (phosphothreonine). The stretch at 754 to 877 (KAVLKRLKEE…LERQAREIEA (124 aa)) forms a coiled coil. The interval 911–1001 (SHNPTGGPGP…ISNGSHMSYT (91 aa)) is disordered. A Phosphoserine modification is found at Ser965. Residues 975–1001 (GGRTEQGMSRSTSVTSQISNGSHMSYT) are compositionally biased toward polar residues.

This sequence belongs to the protein kinase superfamily. STE Ser/Thr protein kinase family. STE20 subfamily. As to quaternary structure, self-associates. Interacts with MAP2K3. Interacts with SPRED1. Interacts with TESK1; the interaction inhibits TAOK1 kinase activity. Interacts with MAP3K7. Proteolytically processed by caspase-3 (CASP3). In terms of processing, autophosphorylated. Phosphorylated by ATM in response to DNA damage. Phosphorylated by LRRK2. As to expression, highly expressed in the testis, and to a lower extent also expressed in brain, placenta, colon and skeletal muscle.

It is found in the cytoplasm. The catalysed reaction is L-seryl-[protein] + ATP = O-phospho-L-seryl-[protein] + ADP + H(+). The enzyme catalyses L-threonyl-[protein] + ATP = O-phospho-L-threonyl-[protein] + ADP + H(+). Serine/threonine-protein kinase activity is inhibited by SPRED1. Its function is as follows. Serine/threonine-protein kinase involved in various processes such as p38/MAPK14 stress-activated MAPK cascade, DNA damage response and regulation of cytoskeleton stability. Phosphorylates MAP2K3, MAP2K6 and MARK2. Acts as an activator of the p38/MAPK14 stress-activated MAPK cascade by mediating phosphorylation and subsequent activation of the upstream MAP2K3 and MAP2K6 kinases. Involved in G-protein coupled receptor signaling to p38/MAPK14. In response to DNA damage, involved in the G2/M transition DNA damage checkpoint by activating the p38/MAPK14 stress-activated MAPK cascade, probably by mediating phosphorylation of MAP2K3 and MAP2K6. Acts as a regulator of cytoskeleton stability by phosphorylating 'Thr-208' of MARK2, leading to activate MARK2 kinase activity and subsequent phosphorylation and detachment of MAPT/TAU from microtubules. Also acts as a regulator of apoptosis: regulates apoptotic morphological changes, including cell contraction, membrane blebbing and apoptotic bodies formation via activation of the MAPK8/JNK cascade. Plays an essential role in the regulation of neuronal development in the central nervous system. Also plays a role in the regulation of neuronal migration to the cortical plate. The sequence is that of Serine/threonine-protein kinase TAO1 (TAOK1) from Homo sapiens (Human).